The sequence spans 318 residues: MNLVRTAMLLAFMTALFMFVGFLIGGRAGMMIAFLIAAGMNFFSYWNSDRMVLSAYRAQQVDERNAPEFFAIVRDLARNAGLPMPKVYLYDSPQPNAFATGRNPENAAVAASTGLLQALSPEEVAGVMAHELAHIQNRDTLTMTITATLAGAISMLGNFAFFFGGNRDNNNNPLGFVGVLVAMIVAPLAAMLVQMAISRTREYSADRRGAEICGNPLWLASALGKIARGAAHVPNEDAERNPATAHMFIINPLSGERMDNLFSTHPDTENRIAALQEMAQSGMNVSTGPVRAVNPTRKSRSVPNTGRGGSQPPRGPWS.

2 consecutive transmembrane segments (helical) span residues 6-26 (TAML…LIGG) and 28-48 (AGMM…YWNS). H130 is a binding site for Zn(2+). The active site involves E131. H134 provides a ligand contact to Zn(2+). Transmembrane regions (helical) follow at residues 145–165 (ITAT…FFGG) and 173–193 (PLGF…AMLV). E202 serves as a coordination point for Zn(2+). The interval 284 to 318 (NVSTGPVRAVNPTRKSRSVPNTGRGGSQPPRGPWS) is disordered.

The protein belongs to the peptidase M48B family. Zn(2+) serves as cofactor.

The protein resides in the cell inner membrane. The sequence is that of Protease HtpX homolog from Rhizobium etli (strain CIAT 652).